The following is a 233-amino-acid chain: Probable chemoreceptor glutamine deamidase CheD (233 aa).

The protein belongs to the CheD family.

It carries out the reaction L-glutaminyl-[protein] + H2O = L-glutamyl-[protein] + NH4(+). Probably deamidates glutamine residues to glutamate on methyl-accepting chemotaxis receptors (MCPs), playing an important role in chemotaxis. This chain is Probable chemoreceptor glutamine deamidase CheD, found in Ralstonia nicotianae (strain ATCC BAA-1114 / GMI1000) (Ralstonia solanacearum).